The following is a 559-amino-acid chain: CTP synthase (559 aa).

Residues 1–283 form an amidoligase domain region; that stretch reads MSTSRTTTNN…DTFLIRRLDL (283 aa). Residue S25 coordinates CTP. S25 lines the UTP pocket. ATP contacts are provided by residues 26–31 and D83; that span reads SLGKGL. 2 residues coordinate Mg(2+): D83 and E157. CTP-binding positions include 164–166, 204–209, and K240; these read DIE and KTKPTQ. Residues 204–209 and K240 each bind UTP; that span reads KTKPTQ. The region spanning 308-557 is the Glutamine amidotransferase type-1 domain; it reads TVGIVGKYVD…VAAALAAAVT (250 aa). G371 serves as a coordination point for L-glutamine. Catalysis depends on C398, which acts as the Nucleophile; for glutamine hydrolysis. L-glutamine contacts are provided by residues 399-402, E421, and R482; that span reads LGLQ. Active-site residues include H530 and E532.

The protein belongs to the CTP synthase family. In terms of assembly, homotetramer.

The enzyme catalyses UTP + L-glutamine + ATP + H2O = CTP + L-glutamate + ADP + phosphate + 2 H(+). The catalysed reaction is L-glutamine + H2O = L-glutamate + NH4(+). It carries out the reaction UTP + NH4(+) + ATP = CTP + ADP + phosphate + 2 H(+). It participates in pyrimidine metabolism; CTP biosynthesis via de novo pathway; CTP from UDP: step 2/2. With respect to regulation, allosterically activated by GTP, when glutamine is the substrate; GTP has no effect on the reaction when ammonia is the substrate. The allosteric effector GTP functions by stabilizing the protein conformation that binds the tetrahedral intermediate(s) formed during glutamine hydrolysis. Inhibited by the product CTP, via allosteric rather than competitive inhibition. Catalyzes the ATP-dependent amination of UTP to CTP with either L-glutamine or ammonia as the source of nitrogen. Regulates intracellular CTP levels through interactions with the four ribonucleotide triphosphates. The chain is CTP synthase from Corynebacterium efficiens (strain DSM 44549 / YS-314 / AJ 12310 / JCM 11189 / NBRC 100395).